A 99-amino-acid polypeptide reads, in one-letter code: MKFFVIALIVLLGLLQYRLWSGDNSLPEYFVLQKQIAAQQDGNAKLNERNQVLKEEIIDLKSGTEAIEERARNELGMVKEGETFYRVVGGDRSVSSPSQ.

Over 1–3 (MKF) the chain is Cytoplasmic. A helical transmembrane segment spans residues 4 to 21 (FVIALIVLLGLLQYRLWS). At 22–99 (GDNSLPEYFV…GDRSVSSPSQ (78 aa)) the chain is on the periplasmic side. Positions 31-73 (VLQKQIAAQQDGNAKLNERNQVLKEEIIDLKSGTEAIEERARN) form a coiled coil.

This sequence belongs to the FtsB family. As to quaternary structure, part of a complex composed of FtsB, FtsL and FtsQ.

The protein resides in the cell inner membrane. Functionally, essential cell division protein. May link together the upstream cell division proteins, which are predominantly cytoplasmic, with the downstream cell division proteins, which are predominantly periplasmic. The protein is Cell division protein FtsB of Shewanella sp. (strain MR-4).